The primary structure comprises 549 residues: Hydroxylamine reductase (549 aa).

[4Fe-4S] cluster-binding residues include cysteine 5, cysteine 8, cysteine 17, and cysteine 23. Residues histidine 243, glutamate 267, cysteine 311, cysteine 403, cysteine 431, cysteine 456, glutamate 491, and lysine 493 each coordinate hybrid [4Fe-2O-2S] cluster. The residue at position 403 (cysteine 403) is a Cysteine persulfide.

It belongs to the HCP family. Requires [4Fe-4S] cluster as cofactor. Hybrid [4Fe-2O-2S] cluster is required as a cofactor.

The protein resides in the cytoplasm. It catalyses the reaction A + NH4(+) + H2O = hydroxylamine + AH2 + H(+). In terms of biological role, catalyzes the reduction of hydroxylamine to form NH(3) and H(2)O. In Desulfitobacterium hafniense (strain DSM 10664 / DCB-2), this protein is Hydroxylamine reductase.